The chain runs to 641 residues: Tegument protein UL35 (641 aa).

3 disordered regions span residues 353 to 373 (ERGE…PREA), 500 to 572 (ASSS…PRQR), and 587 to 641 (AYSH…LRHL). Residues 358-367 (GDEDEEQEND) show a composition bias toward acidic residues. Residues 500 to 563 (ASSSSASSSS…LSGSHGISSA (64 aa)) are compositionally biased toward low complexity. Residues 589–599 (SHHRRHRRRRS) are compositionally biased toward basic residues. Over residues 632 to 641 (DDLAENLRHL) the composition is skewed to basic and acidic residues.

Belongs to the herpesviridae pp85 family. As to quaternary structure, interacts with UL82. Interacts with isoform UL35A. Interacts with host UBP7; this interaction significantly inhibits the ability of USP7 to form nuclear bodies. Interacts with host DCAF1 (via C-terminus). Interacts with host SNX5; this interaction allows proper gB localization during viral assembly. Interacts with host TBK1; this interaction prevents type I interferon production. In terms of assembly, interacts with UL82. Interacts with isoform UL35. Interacts with host UBP7; this interaction significantly inhibits the ability of USP7 to form nuclear bodies. Interacts with host SNX5; this interaction allows proper gB localization during viral assembly.

The protein localises to the virion tegument. It localises to the host nucleus. The protein resides in the host cytoplasm. In terms of biological role, plays important role in immediate-early gene expression through interaction with UL82. Forms nuclear bodies in host nucleus, independently of PML. In turn, UL35 nuclear bodies associate with and remodel PML bodies. Through interaction with host DCAF1, causes cells to accumulate in the G2 phase of the cell cycle by inducing a DNA damage response. Regulates viral assembly by controlling the localization of the essential gB through regulation of a retrograde transport pathway. This modulation occurs via binding and inhibition of host sorting nexin 5/SNX5. Also plays a role in the inhibition of pattern recognition receptor-mediated type I interferon signaling at the level of TBK1. Promotes cytoplasmic UL82 accumulation and inhibits UL35-containing nuclear bodies formation. Regulates viral assembly by controlling the localization of the essential gB through regulation of a retrograde transport pathway. This modulation occurs via binding and inhibition of host sorting nexin 5/SNX5. This is Tegument protein UL35 (UL35) from Homo sapiens (Human).